The primary structure comprises 278 residues: ADP-dependent (S)-NAD(P)H-hydrate dehydratase (278 aa).

Residues 5-272 (TTEIVSRTII…TRIPTYMHRF (268 aa)) form the YjeF C-terminal domain. Positions 40, 103, and 152 each coordinate (6S)-NADPHX. Glycine 214 is a binding site for AMP. Residue aspartate 215 participates in (6S)-NADPHX binding.

Belongs to the NnrD/CARKD family. In terms of assembly, homotetramer. Mg(2+) is required as a cofactor.

It carries out the reaction (6S)-NADHX + ADP = AMP + phosphate + NADH + H(+). The catalysed reaction is (6S)-NADPHX + ADP = AMP + phosphate + NADPH + H(+). Functionally, catalyzes the dehydration of the S-form of NAD(P)HX at the expense of ADP, which is converted to AMP. Together with NAD(P)HX epimerase, which catalyzes the epimerization of the S- and R-forms, the enzyme allows the repair of both epimers of NAD(P)HX, a damaged form of NAD(P)H that is a result of enzymatic or heat-dependent hydration. In Lactiplantibacillus plantarum (strain ATCC BAA-793 / NCIMB 8826 / WCFS1) (Lactobacillus plantarum), this protein is ADP-dependent (S)-NAD(P)H-hydrate dehydratase.